Reading from the N-terminus, the 268-residue chain is Homeobox protein Hox-D12 (268 aa).

The interval T102–S124 is disordered. Residues A200–V259 constitute a DNA-binding region (homeobox).

The protein belongs to the Abd-B homeobox family.

It localises to the nucleus. Its function is as follows. Sequence-specific transcription factor which is part of a developmental regulatory system that provides cells with specific positional identities on the anterior-posterior axis. The polypeptide is Homeobox protein Hox-D12 (Hoxd12) (Mus musculus (Mouse)).